Reading from the N-terminus, the 803-residue chain is MADMSVKQLADLVRTTPERLLEQLKEAGVAITHVDQTISDEEKRKLLLHLKTSHSTETDKKRSKIVLKRKKLSVVKSGKKSVNVEIRSKRTYTKPVVEQKRETEPAPTQEVPLTSDTTNLNEKAEVNVATLEKAVEAEVKEEAKKTPSEKKETPKKGPRKETRRSRKPDKEDKWEREELHMTKLVEERRRRHKPAHMPDSDNASAKLEQGFARPTAPVVREVALPESITVADLAQKMSVKAAEVIKAMMKLGAMVTINQRIDQETAAIVVEEMGHKPKLIKEDVLEENLVATLGEQTGEAVPRAPVVTIMGHVDHGKTSLLDYIRRTKVTSTEAGGITQHIGAYHVETELGMITFLDTPGHEAFTAMRARGAKCTDIVVLVVAADDGIMPQTVEAIQHARAAKVPVVVAVNKIDKPEADPERIKTELSTHDVLPEEWGGDTMFQPISAKTGEGIDALLERILLQAEVLELKAVDNGPARGMVVESRLDRGRGPVATVLVTSGELHLGDILLVGREYGRVRAMIGDDGRPCESAGPSMPVEVLGLSGTPVAGEEAIVVPDERKAREIARFRQGKYREVRLAKKQTAHLERIFDRMGEGKQNTLNIVLKADVQGSLEALTEALNKLSTDEVKVNIIASGVGGITESDVNLAIASDAVVIGFNVRADAPTRVLVEREGVDLRYYSIIYDLIDEVKKALSGLLAPEFEEKIVGLAEVRDVFRSSKIGAIAGCMVVEGVVRRHLPIRVLRDNVVIYEGLLESLRRYKEDVAEVRQGTECGIGVKNYNDVKVGDQIEVYEKTQVHRTIA.

2 disordered regions span residues 95–125 and 138–178; these read PVVEQKRETEPAPTQEVPLTSDTTNLNEKAE and EVKE…EREE. The span at 111 to 121 shows a compositional bias: polar residues; sequence VPLTSDTTNLN. Residues 138 to 155 show a composition bias toward basic and acidic residues; it reads EVKEEAKKTPSEKKETPK. Over residues 156-167 the composition is skewed to basic residues; that stretch reads KGPRKETRRSRK. Over residues 168 to 178 the composition is skewed to basic and acidic residues; sequence PDKEDKWEREE. Positions 302 to 471 constitute a tr-type G domain; the sequence is PRAPVVTIMG…LLQAEVLELK (170 aa). Positions 311–318 are G1; the sequence is GHVDHGKT. 311-318 provides a ligand contact to GTP; the sequence is GHVDHGKT. Residues 336 to 340 form a G2 region; it reads GITQH. The tract at residues 357 to 360 is G3; sequence DTPG. Residues 357 to 361 and 411 to 414 each bind GTP; these read DTPGH and NKID. The interval 411 to 414 is G4; sequence NKID. Positions 447–449 are G5; it reads SAK.

Belongs to the TRAFAC class translation factor GTPase superfamily. Classic translation factor GTPase family. IF-2 subfamily.

Its subcellular location is the cytoplasm. Its function is as follows. One of the essential components for the initiation of protein synthesis. Protects formylmethionyl-tRNA from spontaneous hydrolysis and promotes its binding to the 30S ribosomal subunits. Also involved in the hydrolysis of GTP during the formation of the 70S ribosomal complex. The chain is Translation initiation factor IF-2 from Coxiella burnetii (strain Dugway 5J108-111).